An 87-amino-acid chain; its full sequence is Putative defensin-like protein 317 (87 aa).

The N-terminal stretch at 1-24 (MKSFLVAFLIVLVFFCVEMKIGNG) is a signal peptide. Cystine bridges form between cysteine 38–cysteine 71, cysteine 47–cysteine 80, and cysteine 56–cysteine 82.

This sequence belongs to the DEFL family.

Its subcellular location is the secreted. The sequence is that of Putative defensin-like protein 317 from Arabidopsis thaliana (Mouse-ear cress).